The primary structure comprises 272 residues: Cerberus (272 aa).

An N-terminal signal peptide occupies residues 1-17 (MHLLLVQLLVLLPLGKA). 4 disulfides stabilise this stretch: Cys-162/Cys-209, Cys-176/Cys-223, Cys-186/Cys-239, and Cys-190/Cys-241. In terms of domain architecture, CTCK spans 162 to 246 (CRTVPFNQTI…EECQCMVKTE (85 aa)). N-linked (GlcNAc...) asparagine glycosylation is found at Asn-168 and Asn-222.

Belongs to the DAN family. In terms of assembly, forms monomers and predominantly dimers. In terms of processing, N-glycosylated.

The protein localises to the secreted. In terms of biological role, cytokine that may play a role in anterior neural induction and somite formation during embryogenesis in part, through a BMP-inhibitory mechanism. Can regulate Nodal signaling during gastrulation as well as the formation and patterning of the primitive streak. In Mus musculus (Mouse), this protein is Cerberus (Cer1).